A 119-amino-acid chain; its full sequence is MMKLYSLVIIATLAAAAFAATSEEISAAVSEIISQHQQDLERYAKIVERGEEPKKYIRCSKQLGEKCDLNCECCGAAAYCEDIVYICKEKISDNSILNAFGQAMTAMGNAVSRYYCDAE.

A signal peptide spans Met-1 to Ala-19. 4 disulfides stabilise this stretch: Cys-59/Cys-74, Cys-67/Cys-80, Cys-71/Cys-116, and Cys-73/Cys-87.

This sequence belongs to the neurotoxin 25 family. ICK-8 subfamily. In terms of tissue distribution, expressed by the venom gland.

Its subcellular location is the secreted. Ion channel inhibitor. This Trittame loki (Brush-footed trapdoor spider) protein is Toxin ICK-9.